The following is a 362-amino-acid chain: UV excision repair protein RAD23 homolog A (362 aa).

The Ubiquitin-like domain maps to 1-81; that stretch reads MAVTITLKTL…VVVMVTKAKT (81 aa). Disordered regions lie at residues 80–160 and 201–227; these read KTSP…LVTG and GIPG…TEAG. Residues 88–109 show a composition bias toward low complexity; that stretch reads PSEASPTATPESSTSFPSAPAS. Residue Lys122 forms a Glycyl lysine isopeptide (Lys-Gly) (interchain with G-Cter in ubiquitin) linkage. Residues Ser123, Ser128, Ser133, Ser136, and Ser138 each carry the phosphoserine modification. A compositionally biased stretch (low complexity) spans 126 to 144; the sequence is EESAPTTSPESVSGSVPSS. The 41-residue stretch at 161-201 folds into the UBA 1 domain; that stretch reads SEYETMLTEIMSMGYERERVVAALRASYNNPHRAVEYLLTG. Residues Ser205, Ser294, and Ser356 each carry the phosphoserine modification. Positions 317-357 constitute a UBA 2 domain; it reads PQEKEAIERLKALGFPESLVIQAYFACEKNENLAANFLLSQ.

The protein belongs to the RAD23 family. In terms of assembly, interacts with XPC; the interaction is suggesting the existence of a functional equivalent variant XPC complex. Interacts with PSMD4 and PSMC5. Interacts with ATXN3. Interacts with UBQLN2.

The protein resides in the nucleus. Functionally, multiubiquitin chain receptor involved in modulation of proteasomal degradation. Binds to 'Lys-48'-linked polyubiquitin chains in a length-dependent manner and with a lower affinity to 'Lys-63'-linked polyubiquitin chains. Proposed to be capable to bind simultaneously to the 26S proteasome and to polyubiquitinated substrates and to deliver ubiquitinated proteins to the proteasome. Involved in nucleotide excision repair and is thought to be functional equivalent for RAD23B in global genome nucleotide excision repair (GG-NER) by association with XPC. In vitro, XPC:RAD23A dimer has NER activity. Can stabilize XPC. The sequence is that of UV excision repair protein RAD23 homolog A (RAD23A) from Bos taurus (Bovine).